We begin with the raw amino-acid sequence, 644 residues long: Exoribonuclease 2 (644 aa).

An RNB domain is found at 189 to 516; sequence RQDLTALNFV…NHRLLKAVIK (328 aa). Positions 561-643 constitute an S1 motif domain; it reads NTRFAAEIID…ETRSIIARPA (83 aa).

This sequence belongs to the RNR ribonuclease family. RNase II subfamily.

It localises to the cytoplasm. The enzyme catalyses Exonucleolytic cleavage in the 3'- to 5'-direction to yield nucleoside 5'-phosphates.. In terms of biological role, involved in mRNA degradation. Hydrolyzes single-stranded polyribonucleotides processively in the 3' to 5' direction. This is Exoribonuclease 2 from Salmonella choleraesuis (strain SC-B67).